The primary structure comprises 534 residues: Pentatricopeptide repeat-containing protein At5g50990 (534 aa).

6 PPR repeats span residues 128–158, 164–198, 199–229, 230–264, 265–295, and 301–331; these read NVIT…MLSF, NKFS…GIEL, NAIL…VKRN, DVSI…HVSP, DSIT…MSRR, and KLEH…MPIE. A type E motif region spans residues 336 to 408; it reads IWRSLLSSSR…AKGKSWLEFG (73 aa). The segment at 409-439 is type E(+) motif; sequence GMIHRFKAGDTSHIETKAIYKVLEGLIQKTK. A type DYW motif region spans residues 440–534; that stretch reads SQGFVSDTDL…DGLCSCRDYW (95 aa).

Belongs to the PPR family. PCMP-H subfamily.

This chain is Pentatricopeptide repeat-containing protein At5g50990 (PCMP-H59), found in Arabidopsis thaliana (Mouse-ear cress).